Consider the following 756-residue polypeptide: Protein psiP (756 aa).

Residues Met-1–Gly-23 form the signal peptide. The Extracellular segment spans residues Gln-24–Thr-692. The N-linked (GlcNAc...) asparagine glycan is linked to Asn-82. One can recognise a PA14 domain in the interval Leu-126–Asp-281. 4 N-linked (GlcNAc...) asparagine glycosylation sites follow: Asn-359, Asn-483, Asn-564, and Asn-663. The chain crosses the membrane as a helical span at residues Ala-693 to Gly-713. Topologically, residues Lys-714–Asn-756 are cytoplasmic. Positions Ser-730–Arg-744 are enriched in polar residues. Positions Ser-730–Asn-756 are disordered.

It belongs to the prespore-cell-inducing factor family.

The protein resides in the membrane. The sequence is that of Protein psiP (psiP) from Dictyostelium discoideum (Social amoeba).